The chain runs to 177 residues: MAVTYWTGENLTLRAIQPEDIVIFDSLDDEILRNMDSLHFPRSANNMREWVEEQLEKDEFRFIAVESDNNIVGMIETFDCDRKNGTFGYYLAVFEPYRGKGFAKEMILMVLRFFFLELAYQKVNTTVYSFNNPSIRLHEKLGFMKEGQLRKIIFTKGAYYDGICFGMTREEFELNHG.

One can recognise an N-acetyltransferase domain in the interval 11 to 170 (LTLRAIQPED…DGICFGMTRE (160 aa)).

Belongs to the acetyltransferase family.

This is SPbeta prophage-derived uncharacterized N-acetyltransferase YokL (yokL) from Bacillus subtilis (strain 168).